The sequence spans 1088 residues: ATP-dependent helicase/deoxyribonuclease subunit B (1088 aa).

Belongs to the helicase family. AddB/RexB type 2 subfamily. Heterodimer of AddA and RexB. Mg(2+) serves as cofactor.

Functionally, the heterodimer acts as both an ATP-dependent DNA helicase and an ATP-dependent, dual-direction single-stranded exonuclease. Recognizes the chi site generating a DNA molecule suitable for the initiation of homologous recombination. This subunit has 5' -&gt; 3' nuclease activity but not helicase activity. In Streptococcus suis (strain 98HAH33), this protein is ATP-dependent helicase/deoxyribonuclease subunit B.